The sequence spans 55 residues: MAKSADIRPGITLACTECKERNYITTKNRRNTPDRLELKKFCPRCGKQTVHRETR.

The protein belongs to the bacterial ribosomal protein bL33 family.

The polypeptide is Large ribosomal subunit protein bL33 (Bifidobacterium longum (strain DJO10A)).